Here is a 652-residue protein sequence, read N- to C-terminus: Beta-mannosyltransferase 1 (652 aa).

Residues 1 to 15 (MVDLFQWLKFYSMRR) are Cytoplasmic-facing. A helical membrane pass occupies residues 16–34 (LGQVAITLVLLNLFVFLGY). Over 35–652 (KFTPSTVIGS…LYQLQEEERS (618 aa)) the chain is Extracellular. Asparagine 57 is a glycosylation site (N-linked (GlcNAc...) asparagine). A coiled-coil region spans residues 535–652 (PARYAKQMEN…LYQLQEEERS (118 aa)). Residues 536–621 (ARYAKQMENE…EAKENEAKKK (86 aa)) are disordered.

This sequence belongs to the BMT family.

It is found in the membrane. Beta-mannosyltransferase involved in cell wall biosynthesis. Involved in the beta-mannosylation of outer chains of N-glycans. The protein is Beta-mannosyltransferase 1 (BMT1) of Komagataella phaffii (strain ATCC 76273 / CBS 7435 / CECT 11047 / NRRL Y-11430 / Wegner 21-1) (Yeast).